The following is a 293-amino-acid chain: Small ribosomal subunit biogenesis GTPase RsgA (293 aa).

One can recognise a CP-type G domain in the interval 63-223 (QNELVRPPIA…VADTPGFSAL (161 aa)). GTP contacts are provided by residues 112 to 115 (SKID) and 166 to 174 (GQSGVGKSS). Residues C247, C252, H254, and C260 each coordinate Zn(2+).

The protein belongs to the TRAFAC class YlqF/YawG GTPase family. RsgA subfamily. As to quaternary structure, monomer. Associates with 30S ribosomal subunit, binds 16S rRNA. The cofactor is Zn(2+).

It localises to the cytoplasm. In terms of biological role, one of several proteins that assist in the late maturation steps of the functional core of the 30S ribosomal subunit. Helps release RbfA from mature subunits. May play a role in the assembly of ribosomal proteins into the subunit. Circularly permuted GTPase that catalyzes slow GTP hydrolysis, GTPase activity is stimulated by the 30S ribosomal subunit. The chain is Small ribosomal subunit biogenesis GTPase RsgA from Geobacillus kaustophilus (strain HTA426).